The following is a 119-amino-acid chain: Large ribosomal subunit protein bL20 (119 aa).

Belongs to the bacterial ribosomal protein bL20 family.

Its function is as follows. Binds directly to 23S ribosomal RNA and is necessary for the in vitro assembly process of the 50S ribosomal subunit. It is not involved in the protein synthesizing functions of that subunit. The protein is Large ribosomal subunit protein bL20 of Legionella pneumophila (strain Paris).